The primary structure comprises 477 residues: UDP-N-acetylmuramate--L-alanine ligase (477 aa).

An ATP-binding site is contributed by 115 to 121 (GTHGKTT).

It belongs to the MurCDEF family.

It is found in the cytoplasm. It catalyses the reaction UDP-N-acetyl-alpha-D-muramate + L-alanine + ATP = UDP-N-acetyl-alpha-D-muramoyl-L-alanine + ADP + phosphate + H(+). The protein operates within cell wall biogenesis; peptidoglycan biosynthesis. Functionally, cell wall formation. In Gluconobacter oxydans (strain 621H) (Gluconobacter suboxydans), this protein is UDP-N-acetylmuramate--L-alanine ligase.